The sequence spans 702 residues: Phosphoglycerol transferase I (702 aa).

The next 3 membrane-spanning stretches (helical) occupy residues 2 to 22 (HWML…SPRL), 71 to 91 (FSGY…PLLL), and 103 to 123 (GGAV…ASPL).

Belongs to the OpgB family.

It localises to the cell inner membrane. The enzyme catalyses a phosphatidylglycerol + a membrane-derived-oligosaccharide D-glucose = a 1,2-diacyl-sn-glycerol + a membrane-derived-oligosaccharide 6-(glycerophospho)-D-glucose.. It functions in the pathway glycan metabolism; osmoregulated periplasmic glucan (OPG) biosynthesis. Its function is as follows. Transfers a phosphoglycerol residue from phosphatidylglycerol to the membrane-bound nascent glucan backbones. This is Phosphoglycerol transferase I from Xanthomonas euvesicatoria pv. vesicatoria (strain 85-10) (Xanthomonas campestris pv. vesicatoria).